The primary structure comprises 248 residues: Probable transcriptional regulatory protein PsycPRwf_1013 (248 aa).

It belongs to the TACO1 family.

Its subcellular location is the cytoplasm. The polypeptide is Probable transcriptional regulatory protein PsycPRwf_1013 (Psychrobacter sp. (strain PRwf-1)).